Reading from the N-terminus, the 397-residue chain is UPF0597 protein Tmel_1007 (397 aa).

It belongs to the UPF0597 family.

This is UPF0597 protein Tmel_1007 from Thermosipho melanesiensis (strain DSM 12029 / CIP 104789 / BI429).